The primary structure comprises 359 residues: Peptide chain release factor 1 (359 aa).

At Gln-236 the chain carries N5-methylglutamine. Residues 288 to 307 (QDEQDAERKSTIGTGDRSER) form a disordered region. The segment covering 293 to 307 (AERKSTIGTGDRSER) has biased composition (basic and acidic residues).

Belongs to the prokaryotic/mitochondrial release factor family. Post-translationally, methylated by PrmC. Methylation increases the termination efficiency of RF1.

The protein resides in the cytoplasm. Its function is as follows. Peptide chain release factor 1 directs the termination of translation in response to the peptide chain termination codons UAG and UAA. The sequence is that of Peptide chain release factor 1 from Streptococcus sanguinis (strain SK36).